A 446-amino-acid polypeptide reads, in one-letter code: Endoplasmic reticulum membrane adapter protein XK (446 aa).

Residues 1–2 are Cytoplasmic-facing; the sequence is MK. A helical transmembrane segment spans residues 3–23; the sequence is FPASVIASVFLFVAETAAALY. The Extracellular segment spans residues 24 to 37; it reads LSSTYRSAGDRMWQ. A helical transmembrane segment spans residues 38–58; that stretch reads VLTLLFSLMPCALVQFTLLFV. Residues 59 to 68 lie on the Cytoplasmic side of the membrane; the sequence is HRDLSRDRPL. A helical transmembrane segment spans residues 69-89; the sequence is ALLMHLLQLGPLYRCCEVFCI. Residues 90 to 140 lie on the Extracellular side of the membrane; that stretch reads YCQSDQNEEPYVSITKKRQMPKDGLSEEVEKEVGQAEGKLITHRSAFSRAS. Ser-115 is subject to Phosphoserine. A helical membrane pass occupies residues 141–161; it reads VIQAFLGSAPQLTLQLYITVL. Over 162 to 171 the chain is Cytoplasmic; it reads EQNITTGRCF. The helical transmembrane segment at 172–192 threads the bilayer; it reads IMTLSLLSIVYGALRCNILAI. Residues 193 to 208 lie on the Extracellular side of the membrane; that stretch reads KIKYDEYEVKVKPLAY. Residues 209 to 229 traverse the membrane as a helical segment; it reads VCIFLWRSFEIATRVIVLVLF. At 230 to 235 the chain is on the cytoplasmic side; it reads TSVLKI. The helical transmembrane segment at 236-256 threads the bilayer; sequence WVVAVILVNFFSFFLYPWIVF. The Extracellular portion of the chain corresponds to 257–277; that stretch reads WCSGSPFPENIEKALSRVGTT. Residues 278–298 traverse the membrane as a helical segment; the sequence is IVLCFLTLLYAGINMFCWSAV. Over 299-317 the chain is Cytoplasmic; it reads QLKIDNPELISKSQNWYRL. A helical transmembrane segment spans residues 318 to 338; that stretch reads LIYYMTRFIENSVLLLLWYFF. Topologically, residues 339-349 are extracellular; that stretch reads KTDIYMYVCAP. The chain crosses the membrane as a helical span at residues 350-370; that stretch reads LLILQLLIGYCTGILFMLVFY. The Cytoplasmic segment spans residues 371-446; the sequence is QFFHPCKKLF…IWTAVDLCSA (76 aa).

Belongs to the XK family. In terms of assembly, heterodimer with Kell; disulfide-linked. Interacts with VPS13A.

It localises to the endoplasmic reticulum membrane. Recruits the lipid transfer protein VPS13A from lipid droplets to the endoplasmic reticulum (ER) membrane. This chain is Endoplasmic reticulum membrane adapter protein XK, found in Mus musculus (Mouse).